A 451-amino-acid chain; its full sequence is Tubulin beta-1 chain (451 aa).

Positions 11, 73, 142, 146, 147, 148, 208, and 230 each coordinate GTP. Glu73 provides a ligand contact to Mg(2+). The tract at residues 430 to 451 (QEATADDEAEFEEEGEVEGEYA) is disordered. Acidic residues predominate over residues 433 to 451 (TADDEAEFEEEGEVEGEYA).

It belongs to the tubulin family. In terms of assembly, dimer of alpha and beta chains. A typical microtubule is a hollow water-filled tube with an outer diameter of 25 nm and an inner diameter of 15 nM. Alpha-beta heterodimers associate head-to-tail to form protofilaments running lengthwise along the microtubule wall with the beta-tubulin subunit facing the microtubule plus end conferring a structural polarity. Microtubules usually have 13 protofilaments but different protofilament numbers can be found in some organisms and specialized cells. Mg(2+) is required as a cofactor.

The protein localises to the cytoplasm. It localises to the cytoskeleton. Tubulin is the major constituent of microtubules, a cylinder consisting of laterally associated linear protofilaments composed of alpha- and beta-tubulin heterodimers. Microtubules grow by the addition of GTP-tubulin dimers to the microtubule end, where a stabilizing cap forms. Below the cap, tubulin dimers are in GDP-bound state, owing to GTPase activity of alpha-tubulin. The protein is Tubulin beta-1 chain of Homarus americanus (American lobster).